The following is a 772-amino-acid chain: Protocadherin beta-6 (772 aa).

The first 28 residues, 1–28 (METTLAKTPEKRQVVFLAILLLLWEAGS), serve as a signal peptide directing secretion. 5 Cadherin domains span residues 31 to 133 (IRYS…SPEF), 134 to 242 (PDTE…APEF), 243 to 346 (VQSL…APKL), 347 to 450 (TISS…APAF), and 451 to 560 (TQTS…APFI). Residues 31–690 (IRYSIPEETE…QDEDMLTLYL (660 aa)) lie on the Extracellular side of the membrane. Cys96 and Cys102 form a disulfide bridge. Asn169 carries N-linked (GlcNAc...) asparagine glycosylation. An O-linked (Man) serine glycan is attached at Ser223. Thr225 carries an O-linked (Man) threonine glycan. Residue Asn417 is glycosylated (N-linked (GlcNAc...) asparagine). The N-linked (GlcNAc...) asparagine glycan is linked to Asn566. The region spanning 575 to 675 (LPRAAEPGYL…SQPYLPLPEV (101 aa)) is the Cadherin 6 domain. The chain crosses the membrane as a helical span at residues 691-711 (VIALASVSSLFLLSVLLFVGV). The Cytoplasmic segment spans residues 712–772 (RLCRRVREAS…DFKFLNHYSQ (61 aa)).

Forms homodimers in trans (molecules expressed by two different cells). Forms promiscuous heterodimers in cis (at the plasma membrane of the same cell) with other protocadherins.

It is found in the cell membrane. In terms of biological role, calcium-dependent cell-adhesion protein involved in cells self-recognition and non-self discrimination. Thereby, it is involved in the establishment and maintenance of specific neuronal connections in the brain. The sequence is that of Protocadherin beta-6 from Mus musculus (Mouse).